A 99-amino-acid polypeptide reads, in one-letter code: MAKGQSLQDPFLNALRRERVPVSIYLVNGIKLQGQIESFDQFVILLKNTVSQMVYKHAISTVVPSRPVSHHSNNPGGGSNYHGNNTAASQQSQEADDAE.

In terms of domain architecture, Sm spans 9 to 68 (DPFLNALRRERVPVSIYLVNGIKLQGQIESFDQFVILLKNTVSQMVYKHAISTVVPSRPV). The tract at residues 64–99 (PSRPVSHHSNNPGGGSNYHGNNTAASQQSQEADDAE) is disordered.

The protein belongs to the Hfq family. As to quaternary structure, homohexamer.

RNA chaperone that binds small regulatory RNA (sRNAs) and mRNAs to facilitate mRNA translational regulation in response to envelope stress, environmental stress and changes in metabolite concentrations. Also binds with high specificity to tRNAs. The polypeptide is RNA-binding protein Hfq (Pectobacterium carotovorum subsp. carotovorum (strain PC1)).